The following is a 671-amino-acid chain: Phospholipid:diacylglycerol acyltransferase 1 (671 aa).

Residues 1–46 (MPLIHRKKPTEKPSTPPSEEVVHDEDSQKKPHESSKSHHKKSNGGG) form a disordered region. The Cytoplasmic portion of the chain corresponds to 1–54 (MPLIHRKKPTEKPSTPPSEEVVHDEDSQKKPHESSKSHHKKSNGGGKWSCIDSC). Residues 20–36 (EVVHDEDSQKKPHESSK) show a composition bias toward basic and acidic residues. Residues 55–75 (CWFIGCVCVTWWFLLFLYNAM) form a helical membrane-spanning segment. Residues 76-671 (PASFPQYVTE…EWSERIDLKL (596 aa)) lie on the Lumenal side of the membrane. N-linked (GlcNAc...) asparagine glycosylation occurs at Asn161. Residue Ser254 is the Acyl-ester intermediate of the active site. Asn381 and Asn434 each carry an N-linked (GlcNAc...) asparagine glycan. Catalysis depends on charge relay system residues Asp573 and His626. N-linked (GlcNAc...) asparagine glycosylation is present at Asn647.

Belongs to the AB hydrolase superfamily. Lipase family. As to expression, ubiquitous. Highest expression in young developing seeds.

It is found in the membrane. It catalyses the reaction a glycerophospholipid + a 1,2-diacyl-sn-glycerol = a monoacylglycerophospholipid + a triacyl-sn-glycerol. It functions in the pathway glycerolipid metabolism; triacylglycerol biosynthesis. Triacylglycerol formation by an acyl-CoA independent pathway. The enzyme preferentially transfers acyl groups from the sn-2 position of a phospholipid to diacylglycerol, thus forming an sn-1-lysophospholipid. Involved in epoxy and hydroxy fatty acid accumulation in seeds. Has complementary functions with DAG1 that are essential for triacylglycerol synthesis and normal development of both seeds and pollen. This is Phospholipid:diacylglycerol acyltransferase 1 (PDAT1) from Arabidopsis thaliana (Mouse-ear cress).